Here is a 525-residue protein sequence, read N- to C-terminus: Nucleolar complex protein 4 homolog (525 aa).

Transmembrane regions (helical) follow at residues 305–325 (AAYD…FVPI), 356–376 (FFHL…LVAA), and 384–404 (LSLT…CNLI).

It belongs to the CBF/MAK21 family.

The protein localises to the nucleus membrane. Its subcellular location is the nucleus. It is found in the nucleolus. This Danio rerio (Zebrafish) protein is Nucleolar complex protein 4 homolog (noc4l).